We begin with the raw amino-acid sequence, 382 residues long: Chorismate synthase (382 aa).

Positions 39 and 45 each coordinate NADP(+). FMN contacts are provided by residues 128–130, 246–247, alanine 290, 305–309, and arginine 331; these read RAS, QA, and KPIAT.

The protein belongs to the chorismate synthase family. As to quaternary structure, homotetramer. FMNH2 serves as cofactor.

The catalysed reaction is 5-O-(1-carboxyvinyl)-3-phosphoshikimate = chorismate + phosphate. It functions in the pathway metabolic intermediate biosynthesis; chorismate biosynthesis; chorismate from D-erythrose 4-phosphate and phosphoenolpyruvate: step 7/7. Functionally, catalyzes the anti-1,4-elimination of the C-3 phosphate and the C-6 proR hydrogen from 5-enolpyruvylshikimate-3-phosphate (EPSP) to yield chorismate, which is the branch point compound that serves as the starting substrate for the three terminal pathways of aromatic amino acid biosynthesis. This reaction introduces a second double bond into the aromatic ring system. The polypeptide is Chorismate synthase (Deinococcus geothermalis (strain DSM 11300 / CIP 105573 / AG-3a)).